Consider the following 294-residue polypeptide: ATP phosphoribosyltransferase (294 aa).

The protein belongs to the ATP phosphoribosyltransferase family. Long subfamily. It depends on Mg(2+) as a cofactor.

The protein localises to the cytoplasm. It catalyses the reaction 1-(5-phospho-beta-D-ribosyl)-ATP + diphosphate = 5-phospho-alpha-D-ribose 1-diphosphate + ATP. Its pathway is amino-acid biosynthesis; L-histidine biosynthesis; L-histidine from 5-phospho-alpha-D-ribose 1-diphosphate: step 1/9. With respect to regulation, feedback inhibited by histidine. Its function is as follows. Catalyzes the condensation of ATP and 5-phosphoribose 1-diphosphate to form N'-(5'-phosphoribosyl)-ATP (PR-ATP). Has a crucial role in the pathway because the rate of histidine biosynthesis seems to be controlled primarily by regulation of HisG enzymatic activity. This Chlorobium phaeobacteroides (strain DSM 266 / SMG 266 / 2430) protein is ATP phosphoribosyltransferase.